The primary structure comprises 445 residues: UDP-glucuronic acid decarboxylase 2 (445 aa).

Position 2 is an N-acetylalanine (Ala-2). Residues 2–43 (ASELINRRHETDQPTADAYYPKPIKPWFTVTRPMRYMLREQR) lie on the Cytoplasmic side of the membrane. Residues 44–64 (LIFVLVGIAIATLVFTIFPRS) traverse the membrane as a helical; Signal-anchor for type II membrane protein segment. Residues 65–445 (TQSTPYSDPF…AATTTKTTSA (381 aa)) lie on the Lumenal side of the membrane. Residue 149–174 (DNFFTGRKENVMHHFSNPNFEMIRHD) coordinates NAD(+). Arg-258 lines the substrate pocket. Tyr-261 serves as the catalytic Proton acceptor. Residue 261–265 (YDEGK) participates in NAD(+) binding. A substrate-binding site is contributed by Asn-290. Arg-302 serves as a coordination point for NAD(+). Residues 303-307 (VVSNF), 320-327 (YGDGKQTR), and 387-391 (DPHKR) each bind substrate.

This sequence belongs to the NAD(P)-dependent epimerase/dehydratase family. UDP-glucuronic acid decarboxylase subfamily. As to quaternary structure, homodimer. The cofactor is NAD(+). As to expression, ubiquitous.

It is found in the golgi apparatus. It localises to the golgi stack membrane. It carries out the reaction UDP-alpha-D-glucuronate + H(+) = UDP-alpha-D-xylose + CO2. The protein operates within nucleotide-sugar biosynthesis; UDP-alpha-D-xylose biosynthesis; UDP-alpha-D-xylose from UDP-alpha-D-glucuronate: step 1/1. Its function is as follows. Catalyzes the NAD-dependent decarboxylation of UDP-glucuronic acid to UDP-xylose. Necessary for the biosynthesis of the core tetrasaccharide in glycosaminoglycan biosynthesis. In Arabidopsis thaliana (Mouse-ear cress), this protein is UDP-glucuronic acid decarboxylase 2 (UXS2).